We begin with the raw amino-acid sequence, 557 residues long: Transcription factor fil1 (557 aa).

Positions 234–258 are disordered; the sequence is SPVKRELNDSTSPSKLSESSSSLTG. Positions 243 to 258 are enriched in low complexity; that stretch reads STSPSKLSESSSSLTG. 2 consecutive GATA-type zinc fingers follow at residues 365 to 390 and 419 to 443; these read CFNC…CNAC and CANC…CNAC.

The protein localises to the nucleus. The protein resides in the cytoplasm. Functionally, activates genes required for amino acid biosynthesis and acts as a master transcriptional regulator during amino acid starvation. Binds variations of the DNA sequence 5'-GAT[AC]GC-3'. This chain is Transcription factor fil1, found in Schizosaccharomyces pombe (strain 972 / ATCC 24843) (Fission yeast).